A 262-amino-acid polypeptide reads, in one-letter code: Phosphonates import ATP-binding protein PhnC (262 aa).

The ABC transporter domain maps to 5 to 253; sequence IRVEKLAKTF…RFDHLYRSIN (249 aa). 37–44 lines the ATP pocket; the sequence is GPSGSGKS.

Belongs to the ABC transporter superfamily. Phosphonates importer (TC 3.A.1.9.1) family. The complex is composed of two ATP-binding proteins (PhnC), two transmembrane proteins (PhnE) and a solute-binding protein (PhnD).

Its subcellular location is the cell inner membrane. The catalysed reaction is phosphonate(out) + ATP + H2O = phosphonate(in) + ADP + phosphate + H(+). Part of the ABC transporter complex PhnCDE involved in phosphonates, phosphate esters, phosphite and phosphate import. Responsible for energy coupling to the transport system. The chain is Phosphonates import ATP-binding protein PhnC from Escherichia coli (strain K12).